We begin with the raw amino-acid sequence, 122 residues long: Large ribosomal subunit protein uL14 (122 aa).

Belongs to the universal ribosomal protein uL14 family. Part of the 50S ribosomal subunit. Forms a cluster with proteins L3 and L19. In the 70S ribosome, L14 and L19 interact and together make contacts with the 16S rRNA in bridges B5 and B8.

Functionally, binds to 23S rRNA. Forms part of two intersubunit bridges in the 70S ribosome. This Chloroflexus aurantiacus (strain ATCC 29366 / DSM 635 / J-10-fl) protein is Large ribosomal subunit protein uL14.